Reading from the N-terminus, the 257-residue chain is Synaptosomal-associated protein 29 (257 aa).

Residues 1–42 (MSGYPKSYNPFDDDVEDEDTRPAPWKDARDLPDGPDPPIDRQ) are disordered. Residues 20–32 (TRPAPWKDARDLP) are compositionally biased toward basic and acidic residues. Residues serine 77, serine 78, serine 114, serine 163, serine 181, serine 203, and serine 209 each carry the phosphoserine modification. The 63-residue stretch at 195–257 (RAYHQKIDSN…KSTEKKVRQL (63 aa)) folds into the t-SNARE coiled-coil homology domain.

Belongs to the SNAP-25 family. In terms of assembly, forms a SNARE complex, composed of VAMP8, SNAP29 and STX17, involved in fusion of autophagosome with lysosome. Interacts with multiple syntaxins including STX6. Interacts with EIPR1. Interacts with STX17; this interaction is increased in the absence of TMEM39A. In terms of tissue distribution, widely expressed.

Its subcellular location is the cytoplasm. The protein resides in the golgi apparatus membrane. It localises to the cytoplasmic vesicle. It is found in the autophagosome membrane. The protein localises to the cell projection. Its subcellular location is the cilium membrane. Functionally, SNAREs, soluble N-ethylmaleimide-sensitive factor-attachment protein receptors, are essential proteins for fusion of cellular membranes. SNAREs localized on opposing membranes assemble to form a trans-SNARE complex, an extended, parallel four alpha-helical bundle that drives membrane fusion. SNAP29 is a SNARE involved in autophagy through the direct control of autophagosome membrane fusion with the lysososome membrane. Also plays a role in ciliogenesis by regulating membrane fusions. The polypeptide is Synaptosomal-associated protein 29 (Rattus norvegicus (Rat)).